Consider the following 143-residue polypeptide: Large ribosomal subunit protein uL11 (143 aa).

Belongs to the universal ribosomal protein uL11 family. Part of the ribosomal stalk of the 50S ribosomal subunit. Interacts with L10 and the large rRNA to form the base of the stalk. L10 forms an elongated spine to which L12 dimers bind in a sequential fashion forming a multimeric L10(L12)X complex. Post-translationally, one or more lysine residues are methylated.

Its function is as follows. Forms part of the ribosomal stalk which helps the ribosome interact with GTP-bound translation factors. This Cupriavidus metallidurans (strain ATCC 43123 / DSM 2839 / NBRC 102507 / CH34) (Ralstonia metallidurans) protein is Large ribosomal subunit protein uL11.